A 311-amino-acid chain; its full sequence is Ribosomal RNA large subunit methyltransferase F (311 aa).

This sequence belongs to the methyltransferase superfamily. METTL16/RlmF family.

Its subcellular location is the cytoplasm. It catalyses the reaction adenosine(1618) in 23S rRNA + S-adenosyl-L-methionine = N(6)-methyladenosine(1618) in 23S rRNA + S-adenosyl-L-homocysteine + H(+). Functionally, specifically methylates the adenine in position 1618 of 23S rRNA. This chain is Ribosomal RNA large subunit methyltransferase F, found in Pectobacterium carotovorum subsp. carotovorum (strain PC1).